Reading from the N-terminus, the 289-residue chain is Aquaporin-2 (289 aa).

The interval 1 to 36 is disordered; sequence MSNESNDLEKNISHLDPTGVDNAYIPPEQPETKHSR. Residues 1–47 lie on the Cytoplasmic side of the membrane; it reads MSNESNDLEKNISHLDPTGVDNAYIPPEQPETKHSRFNIDRDTLRNH. The chain crosses the membrane as a helical span at residues 48–68; that stretch reads FIAAVGEFCGTFMFLWCAYVI. The Extracellular portion of the chain corresponds to 69–90; the sequence is CNVANHDVALTTEPEGSHPGQL. Residues 91–111 form a helical membrane-spanning segment; that stretch reads IMIALGFGFSVMFSIWCFAGV. Over 112-135 the chain is Cytoplasmic; that stretch reads SGGALNPAVSLSLCLARAISPARC. The NPA 1 signature appears at 117–119; it reads NPA. The helical transmembrane segment at 136–156 threads the bilayer; the sequence is VVMWFPQIIAGMAAGGAASAM. Residues 157–175 are Extracellular-facing; sequence TPGKVLFTNALGLGCSRSR. A helical transmembrane segment spans residues 176–196; sequence GLFLEMFGTAVLCLTVLMTAV. The Cytoplasmic portion of the chain corresponds to 197 to 202; the sequence is EKRETN. The chain crosses the membrane as a helical span at residues 203-223; the sequence is FMAALPIGISLFMAHMALTGY. Topologically, residues 224 to 247 are extracellular; it reads TGTGVNPARSLGAAVAARYFPHYH. Residues 229–231 carry the NPA 2 motif; it reads NPA. A helical membrane pass occupies residues 248 to 268; the sequence is WIYWIGPLLGAFLAWSVWQLL. Residues 269–289 are Cytoplasmic-facing; the sequence is QILDYTTYVNAEKAAGQKKED.

It belongs to the MIP/aquaporin (TC 1.A.8) family.

It is found in the endoplasmic reticulum membrane. The protein localises to the cell membrane. Its function is as follows. Water channel required to facilitate the transport of water across membranes. Involved in freeze tolerance, osmotolerance and cell flocculation in liquid cultures. Is non-functional in most laboratory strains. This Saccharomyces cerevisiae (Baker's yeast) protein is Aquaporin-2 (AQY2).